We begin with the raw amino-acid sequence, 837 residues long: Vacuolar membrane protease (837 aa).

The Cytoplasmic portion of the chain corresponds to 1–36 (MSEEEVHDTSSEASEVFTNQPNAFVRGVRSIFGYRK). A helical transmembrane segment spans residues 37–57 (TSLTLFVILTIVVTAGLSFYD). Residues 58–355 (NSLELTIELP…FATPISALAR (298 aa)) lie on the Vacuolar side of the membrane. Asparagine 143 is a glycosylation site (N-linked (GlcNAc...) asparagine). Histidine 157 and aspartate 169 together coordinate Zn(2+). Catalysis depends on glutamate 201, which acts as the Proton acceptor. Residues glutamate 202, glutamate 227, and histidine 299 each contribute to the Zn(2+) site. A helical membrane pass occupies residues 356–376 (VNLVLLVLFPVVSTPLLFVIV). Topologically, residues 377–384 (KYKKWKLR) are cytoplasmic. A helical membrane pass occupies residues 385–405 (VTNFLGVPLAMGLAVAVGQVG). Residues 406–415 (NPMLVSSHPM) lie on the Vacuolar side of the membrane. The chain crosses the membrane as a helical span at residues 416-436 (MVVATTTSIVVLVYYVVLNGV). Topologically, residues 437-446 (DWVNTSSDQK) are cytoplasmic. A helical transmembrane segment spans residues 447 to 467 (LVTMIEVSFVYWVVLVYVTWS). The Vacuolar portion of the chain corresponds to 468 to 474 (GGDHTGE). A helical membrane pass occupies residues 475–495 (FGVTVLFFVQASTSLLGLIGW). Residues 496-539 (TFTRVRGGDEPLLSGEEERYGTEDERDTEKPLVEHNYDWSLQYL) lie on the Cytoplasmic side of the membrane. Residues 540 to 560 (LIVPVSSLVVYNSGWLVLEGV) traverse the membrane as a helical segment. N-linked (GlcNAc...) asparagine glycosylation is present at asparagine 561. The Vacuolar portion of the chain corresponds to 561-572 (NKTVQESLASEH). A helical transmembrane segment spans residues 573–593 (LIYWIVVVFSQFLVLPVVPFI). The Cytoplasmic portion of the chain corresponds to 594–598 (TKFNR). The chain crosses the membrane as a helical span at residues 599–619 (YIVLGLSVVVVVGVLMSMAVH). Residues 620-837 (PFNQGSPMKL…LVGVVKHVDV (218 aa)) are Vacuolar-facing. N-linked (GlcNAc...) asparagine glycosylation is present at asparagine 689.

Belongs to the peptidase M28 family. It depends on Zn(2+) as a cofactor.

Its subcellular location is the vacuole membrane. Functionally, may be involved in vacuolar sorting and osmoregulation. The protein is Vacuolar membrane protease of Candida albicans (strain SC5314 / ATCC MYA-2876) (Yeast).